Consider the following 181-residue polypeptide: MRVVLLGPPGAGKGTQAQKLAEKLGIPQISTGELFRKNIQDGTKLGVEAKRYLDAGDLVPSDLTNQLVDDRLDQPDTAAGFILDGYPRSVEQAKALHEMLRRRDTDIDAVLEFRVSQDELLQRLKGRGRADDTDEVILNRMKVYRDETAPLLEFYDTEVKTVDAIGTLDEVFARALQALGK.

Gly-10 to Thr-15 provides a ligand contact to ATP. The segment at Ser-30–Val-59 is NMP. AMP contacts are provided by residues Thr-31, Arg-36, Asp-57–Val-59, Gly-85–Arg-88, and Gln-92. Positions Gly-126–Asp-132 are LID. Residue Arg-127 participates in ATP binding. Residues Arg-129 and Arg-140 each coordinate AMP. Residue Gly-166 coordinates ATP.

The protein belongs to the adenylate kinase family. Monomer.

It localises to the cytoplasm. The enzyme catalyses AMP + ATP = 2 ADP. The protein operates within purine metabolism; AMP biosynthesis via salvage pathway; AMP from ADP: step 1/1. Functionally, catalyzes the reversible transfer of the terminal phosphate group between ATP and AMP. Plays an important role in cellular energy homeostasis and in adenine nucleotide metabolism. This is Adenylate kinase from Mycobacterium ulcerans (strain Agy99).